We begin with the raw amino-acid sequence, 411 residues long: Argininosuccinate lyase (411 aa).

It belongs to the lyase 1 family. Argininosuccinate lyase subfamily.

Its subcellular location is the cytoplasm. The enzyme catalyses 2-(N(omega)-L-arginino)succinate = fumarate + L-arginine. Its pathway is amino-acid biosynthesis; L-arginine biosynthesis; L-arginine from L-ornithine and carbamoyl phosphate: step 3/3. The sequence is that of Argininosuccinate lyase from Legionella pneumophila (strain Paris).